The chain runs to 398 residues: Acetate kinase (398 aa).

Asn-7 serves as a coordination point for Mg(2+). Lys-14 contacts ATP. Arg-91 is a substrate binding site. The active-site Proton donor/acceptor is the Asp-148. ATP is bound by residues 208 to 212, 283 to 285, and 331 to 335; these read HIGNG, DMR, and GVGEN. Glu-384 contributes to the Mg(2+) binding site.

The protein belongs to the acetokinase family. In terms of assembly, homodimer. It depends on Mg(2+) as a cofactor. Mn(2+) serves as cofactor.

It is found in the cytoplasm. The catalysed reaction is acetate + ATP = acetyl phosphate + ADP. Its pathway is metabolic intermediate biosynthesis; acetyl-CoA biosynthesis; acetyl-CoA from acetate: step 1/2. Functionally, catalyzes the formation of acetyl phosphate from acetate and ATP. Can also catalyze the reverse reaction. In Phocaeicola vulgatus (strain ATCC 8482 / DSM 1447 / JCM 5826 / CCUG 4940 / NBRC 14291 / NCTC 11154) (Bacteroides vulgatus), this protein is Acetate kinase.